The primary structure comprises 283 residues: Diaminopimelate epimerase (283 aa).

Substrate is bound by residues Asn14, Gln47, and Asn67. Residue Cys76 is the Proton donor of the active site. Residues 77-78, Asn164, Asn197, and 215-216 each bind substrate; these read GN and ER. Cys224 acts as the Proton acceptor in catalysis. 225 to 226 is a binding site for substrate; sequence GT.

This sequence belongs to the diaminopimelate epimerase family. Homodimer.

It localises to the cytoplasm. The enzyme catalyses (2S,6S)-2,6-diaminopimelate = meso-2,6-diaminopimelate. Its pathway is amino-acid biosynthesis; L-lysine biosynthesis via DAP pathway; DL-2,6-diaminopimelate from LL-2,6-diaminopimelate: step 1/1. Catalyzes the stereoinversion of LL-2,6-diaminopimelate (L,L-DAP) to meso-diaminopimelate (meso-DAP), a precursor of L-lysine and an essential component of the bacterial peptidoglycan. In Neisseria meningitidis serogroup A / serotype 4A (strain DSM 15465 / Z2491), this protein is Diaminopimelate epimerase.